The primary structure comprises 290 residues: Plasma membrane ascorbate-dependent reductase CYBRD1 (290 aa).

At 1–7 the chain is on the cytoplasmic side; it reads MAMEGYR. Residues 8–32 traverse the membrane as a helical segment; the sequence is GFLGLLVSALLVGFLSVIFVLIWVL. The Cytochrome b561 domain occupies 15-220; sequence SALLVGFLSV…FGALIFWIVT (206 aa). Residues 33-47 lie on the Extracellular side of the membrane; the sequence is HFREGLGWNGSGLEF. A helical membrane pass occupies residues 48–69; the sequence is NWHPVLAVTGFVFIQGIAIIVY. Residues His-50, Arg-70, and Lys-79 each coordinate heme b. Topologically, residues 70-78 are cytoplasmic; the sequence is RLPWTWKCS. L-ascorbate is bound by residues Lys-79 and Lys-83. A helical membrane pass occupies residues 79-105; that stretch reads KLLMKSIHAGLNAVAAILAIISVVAVF. His-86 is a binding site for heme b. Over 106-118 the chain is Extracellular; it reads EYHNVQKVPHMYS. Residue His-108 participates in Fe(3+) binding. Heme b contacts are provided by residues 115–118 and His-120; that span reads HMYS. The helical transmembrane segment at 119-144 threads the bilayer; the sequence is LHSWVGLTALILYIQQLVVGFFVFLL. Over 145-151 the chain is Cytoplasmic; the sequence is PWAPPSL. Arg-152 serves as a coordination point for L-ascorbate. Residues 152-179 traverse the membrane as a helical segment; the sequence is RAIVMPIHVYSGLLLFGTVIATVLMGVT. Positions 159 and 180 each coordinate heme b. The Extracellular portion of the chain corresponds to 180 to 197; sequence EKLFFVLKHPSYHSFPPE. The chain crosses the membrane as a helical span at residues 198-222; that stretch reads GVFTNTLGLLILVFGALIFWIVTRP. The Cytoplasmic segment spans residues 223–290; it reads QWKRPREPGS…LADSGQRSTM (68 aa). Position 225 (Lys-225) interacts with heme b. Phosphoserine is present on Ser-232. The segment at 257 to 290 is disordered; sequence SMDAADPADAESSSEGAARKRTLGLADSGQRSTM. Low complexity predominate over residues 260–272; that stretch reads AADPADAESSSEG. Thr-289 carries the post-translational modification Phosphothreonine.

In terms of assembly, homodimer. Heme b serves as cofactor. In terms of tissue distribution, highly expressed in the brush-border membrane of duodenal enterocytes (at protein level). Also expressed in liver and spleen.

Its subcellular location is the cell membrane. It is found in the apical cell membrane. It catalyses the reaction Fe(3+)(out) + L-ascorbate(in) = monodehydro-L-ascorbate radical(in) + Fe(2+)(out) + H(+). The catalysed reaction is Cu(2+)(out) + L-ascorbate(in) = Cu(+)(out) + monodehydro-L-ascorbate radical(in) + H(+). It carries out the reaction monodehydro-L-ascorbate radical(out) + L-ascorbate(in) = monodehydro-L-ascorbate radical(in) + L-ascorbate(out). Functionally, plasma membrane reductase that uses cytoplasmic ascorbate as an electron donor to reduce extracellular Fe(3+) into Fe(2+). Probably functions in dietary iron absorption at the brush border of duodenal enterocytes by producing Fe(2+), the divalent form of iron that can be transported into enterocytes. It is also able to reduce extracellular monodehydro-L-ascorbate and may be involved in extracellular ascorbate regeneration by erythrocytes in blood. May also act as a ferrireductase in airway epithelial cells. May also function as a cupric transmembrane reductase. The sequence is that of Plasma membrane ascorbate-dependent reductase CYBRD1 from Mus musculus (Mouse).